A 425-amino-acid chain; its full sequence is Phosphoribosylamine--glycine ligase (425 aa).

An ATP-grasp domain is found at 109-315 (KALMQEAGIP…LEELILACVQ (207 aa)). Position 135–195 (135–195 (IQAQGAPIVV…EECLTGQEVS (61 aa))) interacts with ATP. Mg(2+)-binding residues include Glu-285 and Asn-287.

This sequence belongs to the GARS family. It depends on Mg(2+) as a cofactor. Requires Mn(2+) as cofactor.

It carries out the reaction 5-phospho-beta-D-ribosylamine + glycine + ATP = N(1)-(5-phospho-beta-D-ribosyl)glycinamide + ADP + phosphate + H(+). The protein operates within purine metabolism; IMP biosynthesis via de novo pathway; N(1)-(5-phospho-D-ribosyl)glycinamide from 5-phospho-alpha-D-ribose 1-diphosphate: step 2/2. This is Phosphoribosylamine--glycine ligase from Nostoc sp. (strain PCC 7120 / SAG 25.82 / UTEX 2576).